The following is a 426-amino-acid chain: Phosphomethylpyrimidine synthase (426 aa).

Residues asparagine 65, methionine 94, tyrosine 123, histidine 162, 184-186 (SRG), 225-228 (DGMR), and glutamate 264 contribute to the substrate site. Histidine 268 is a Zn(2+) binding site. Tyrosine 291 contacts substrate. Residue histidine 332 coordinates Zn(2+). Positions 408, 411, and 415 each coordinate [4Fe-4S] cluster.

It belongs to the ThiC family. It depends on [4Fe-4S] cluster as a cofactor.

The catalysed reaction is 5-amino-1-(5-phospho-beta-D-ribosyl)imidazole + S-adenosyl-L-methionine = 4-amino-2-methyl-5-(phosphooxymethyl)pyrimidine + CO + 5'-deoxyadenosine + formate + L-methionine + 3 H(+). It participates in cofactor biosynthesis; thiamine diphosphate biosynthesis. Functionally, catalyzes the synthesis of the hydroxymethylpyrimidine phosphate (HMP-P) moiety of thiamine from aminoimidazole ribotide (AIR) in a radical S-adenosyl-L-methionine (SAM)-dependent reaction. In Methanococcus maripaludis (strain C5 / ATCC BAA-1333), this protein is Phosphomethylpyrimidine synthase.